A 503-amino-acid chain; its full sequence is Cytochrome P450 6l1 (503 aa).

Cys438 serves as a coordination point for heme.

Belongs to the cytochrome P450 family. Heme serves as cofactor. As to expression, detected only in testes and accessory glands of male adults.

The protein resides in the endoplasmic reticulum membrane. The protein localises to the microsome membrane. This chain is Cytochrome P450 6l1 (CYP6L1), found in Blattella germanica (German cockroach).